The chain runs to 115 residues: Large ribosomal subunit protein bL19 (115 aa).

It belongs to the bacterial ribosomal protein bL19 family.

Functionally, this protein is located at the 30S-50S ribosomal subunit interface and may play a role in the structure and function of the aminoacyl-tRNA binding site. The protein is Large ribosomal subunit protein bL19 of Francisella tularensis subsp. holarctica (strain FTNF002-00 / FTA).